The sequence spans 268 residues: uncharacterized protein (268 aa).

The signal sequence occupies residues 1 to 18 (MRGFLLLSLGVFSFSALA). Domain stretches follow at residues 24–184 (SHDL…ELLP) and 185–268 (SPAT…NWLR). An intrachain disulfide couples C110 to C115.

In terms of assembly, monomer.

The protein resides in the periplasm. This is an uncharacterized protein from Pseudomonas aeruginosa (strain ATCC 15692 / DSM 22644 / CIP 104116 / JCM 14847 / LMG 12228 / 1C / PRS 101 / PAO1).